We begin with the raw amino-acid sequence, 102 residues long: PqqA binding protein (102 aa).

It belongs to the PqqD family. As to quaternary structure, monomer. Interacts with PqqE.

The protein operates within cofactor biosynthesis; pyrroloquinoline quinone biosynthesis. Functionally, functions as a PqqA binding protein and presents PqqA to PqqE, in the pyrroloquinoline quinone (PQQ) biosynthetic pathway. This Rhodopseudomonas palustris (strain HaA2) protein is PqqA binding protein.